The following is a 164-amino-acid chain: Photosystem II extrinsic protein V (164 aa).

Residues 1-27 form the signal peptide; sequence MALKSKFLVGSILATFILNGFSSPAQA. Heme c is bound by residues Cys-64, Cys-67, His-68, and His-119.

Belongs to the cytochrome c family. PsbV subfamily. In terms of assembly, PSII is composed of 1 copy each of membrane proteins PsbA, PsbB, PsbC, PsbD, PsbE, PsbF, PsbH, PsbI, PsbJ, PsbK, PsbL, PsbM, PsbT, PsbY, PsbZ, Psb30/Ycf12, at least 3 peripheral proteins of the oxygen-evolving complex and a large number of cofactors. It forms dimeric complexes. Heme c is required as a cofactor.

It localises to the plastid. The protein resides in the chloroplast thylakoid membrane. Its function is as follows. One of the extrinsic, lumenal subunits of photosystem II (PSII). PSII is a light-driven water plastoquinone oxidoreductase, using light energy to abstract electrons from H(2)O, generating a proton gradient subsequently used for ATP formation. The extrinsic proteins stabilize the structure of photosystem II oxygen-evolving complex (OEC), the ion environment of oxygen evolution and protect the OEC against heat-induced inactivation. This Emiliania huxleyi (Coccolithophore) protein is Photosystem II extrinsic protein V.